We begin with the raw amino-acid sequence, 84 residues long: Magnetosome protein MamR (84 aa).

Belongs to the magnetosome MamR family.

It localises to the magnetosome. May play a role in controlling magnetite number and size but not in control of magnetite morphology. The protein is Magnetosome protein MamR of Paramagnetospirillum magneticum (strain ATCC 700264 / AMB-1) (Magnetospirillum magneticum).